The following is a 464-amino-acid chain: MVQEACSPIGPALGDAAPGFGTDGIRGLAGTVLTPALCLQVGYWVGRVLQAEGPVLIGMDSRTSGSMVVAALTAGLTAAGRDVWTLGLCPTPAVPLLIRQLGVAGGLMVSASHNPPADNGIKVFGVDGAKLSASRQAQVEACLKGQTSMAEQGKFRCGVARPSADLLDRYREVLQESVAERRLDGVPIVLDLCWGSATACGADAFRALGADLTVLHGEPDGSRINVACGSTHLEPLQRAVIERGAAMGFAFDGDADRMLAVDGRGRIIDGDHVLFLWGSVLQEQQALPEQRLVATVMSNLGFERAWQQRGGTLERTPVGDQHVHAAMVASGAALGGEQSGHILSASHGLCGDGVLTAVQLATLCYAQGISLSDWLDRSFQAYPQKLVNVRVMDRARRKNWSACTALTDAIASAEQSMGENGRILVRASGTEPVLRVMVEAEQSDAVEHLTGHLAAVAEEHLNVA.

Ser-112 serves as the catalytic Phosphoserine intermediate. Residues Ser-112, Asp-252, Asp-254, and Asp-256 each coordinate Mg(2+). At Ser-112 the chain carries Phosphoserine.

It belongs to the phosphohexose mutase family. Mg(2+) is required as a cofactor. Post-translationally, activated by phosphorylation.

The catalysed reaction is alpha-D-glucosamine 1-phosphate = D-glucosamine 6-phosphate. Functionally, catalyzes the conversion of glucosamine-6-phosphate to glucosamine-1-phosphate. The chain is Phosphoglucosamine mutase from Synechococcus sp. (strain CC9605).